A 473-amino-acid chain; its full sequence is Serine palmitoyltransferase 1 (473 aa).

The tract at residues 1 to 66 (MATATEQWVL…KEELIEEWQP (66 aa)) is interaction with SPTLC2. A helical transmembrane segment spans residues 16 to 36 (ALYEAPAYHLILEGILILWII). Phosphotyrosine; by ABL is present on Y164.

The protein belongs to the class-II pyridoxal-phosphate-dependent aminotransferase family. In terms of assembly, component of the serine palmitoyltransferase (SPT) complex, which is also composed of SPTLC2 or SPTLC3 and SPTSSA or SPTSSB. The heterodimer with SPTLC2 or SPTLC3 forms the catalytic core of the enzyme, while SPTSSA or SPTSSB subunits determine substrate specificity. SPT also interacts with ORMDL proteins, especially ORMDL3, which negatively regulate SPT activity in the presence of ceramides. Forms dimers of heterodimers with SPTLC2. Interacts with RTN4. It depends on pyridoxal 5'-phosphate as a cofactor. Post-translationally, phosphorylation at Tyr-164 inhibits activity and promotes cell survival.

Its subcellular location is the endoplasmic reticulum membrane. It carries out the reaction L-serine + hexadecanoyl-CoA + H(+) = 3-oxosphinganine + CO2 + CoA. It catalyses the reaction octadecanoyl-CoA + L-serine + H(+) = 3-oxoeicosasphinganine + CO2 + CoA. The enzyme catalyses tetradecanoyl-CoA + L-serine + H(+) = 3-oxohexadecasphinganine + CO2 + CoA. The catalysed reaction is dodecanoyl-CoA + L-serine + H(+) = 3-oxotetradecasphinganine + CO2 + CoA. It functions in the pathway lipid metabolism; sphingolipid metabolism. Its activity is regulated as follows. SPT complex catalytic activity is negatively regulated by ORMDL proteins, including ORMDL3, in the presence of ceramides. This mechanism allows to maintain ceramide levels at sufficient concentrations for the production of complex sphingolipids, but which prevents the accumulation of ceramides to levels that trigger apoptosis. Its function is as follows. Component of the serine palmitoyltransferase multisubunit enzyme (SPT) that catalyzes the initial and rate-limiting step in sphingolipid biosynthesis by condensing L-serine and activated acyl-CoA (most commonly palmitoyl-CoA) to form long-chain bases. The SPT complex is also composed of SPTLC2 or SPTLC3 and SPTSSA or SPTSSB. Within this complex, the heterodimer with SPTLC2 or SPTLC3 forms the catalytic core. The composition of the serine palmitoyltransferase (SPT) complex determines the substrate preference. The SPTLC1-SPTLC2-SPTSSA complex shows a strong preference for C16-CoA substrate, while the SPTLC1-SPTLC3-SPTSSA isozyme uses both C14-CoA and C16-CoA as substrates, with a slight preference for C14-CoA. The SPTLC1-SPTLC2-SPTSSB complex shows a strong preference for C18-CoA substrate, while the SPTLC1-SPTLC3-SPTSSB isozyme displays an ability to use a broader range of acyl-CoAs, without apparent preference. Required for adipocyte cell viability and metabolic homeostasis. This is Serine palmitoyltransferase 1 (SPTLC1) from Pongo abelii (Sumatran orangutan).